The primary structure comprises 372 residues: Cytochrome b (372 aa).

Helical transmembrane passes span 25–45 (FGSMLLTCLMMQIMTGFFLAI), 69–90 (WIMQNIHAIGASVFFICIYIHI), 105–125 (WFSGTALLITLMATAFFGYVL), and 170–190 (FFALHFILPFTIASLSSIHII). Residues histidine 75 and histidine 89 each coordinate heme b. The heme b site is built by histidine 174 and histidine 188. Histidine 193 contributes to the a ubiquinone binding site. 4 helical membrane-spanning segments follow: residues 218–238 (YKDMLMTTSMFMLMFMILSFM), 280–300 (LGGTLALLMSVTILITAPFTH), 312–332 (LAQTLFWTLIATFITITWTAT), and 339–358 (FILISQMASVFYFSFFIMNP).

It belongs to the cytochrome b family. In terms of assembly, the cytochrome bc1 complex contains 3 respiratory subunits (MT-CYB, CYC1 and UQCRFS1), 2 core proteins (UQCRC1 and UQCRC2) and probably 6 low-molecular weight proteins. Requires heme b as cofactor.

It is found in the mitochondrion inner membrane. Its function is as follows. Component of the ubiquinol-cytochrome c reductase complex (complex III or cytochrome b-c1 complex) that is part of the mitochondrial respiratory chain. The b-c1 complex mediates electron transfer from ubiquinol to cytochrome c. Contributes to the generation of a proton gradient across the mitochondrial membrane that is then used for ATP synthesis. The sequence is that of Cytochrome b (MT-CYB) from Sinomicrurus japonicus (Coral snake).